Reading from the N-terminus, the 261-residue chain is Glucose 1-dehydrogenase 3 (261 aa).

11–35 (VITGGSTGLGRAMAVRFGQEEAKVV) contacts NAD(+). Residue S145 coordinates substrate. Y158 serves as the catalytic Proton acceptor.

Belongs to the short-chain dehydrogenases/reductases (SDR) family. Homotetramer.

The enzyme catalyses D-glucose + NAD(+) = D-glucono-1,5-lactone + NADH + H(+). It catalyses the reaction D-glucose + NADP(+) = D-glucono-1,5-lactone + NADPH + H(+). The protein is Glucose 1-dehydrogenase 3 (gdhIII) of Priestia megaterium (Bacillus megaterium).